A 403-amino-acid chain; its full sequence is Coiled-coil domain-containing glutamate-rich protein 1 (403 aa).

Residues 1 to 11 (MTQTVNEREDP) are compositionally biased toward basic and acidic residues. Disordered stretches follow at residues 1-23 (MTQT…ASSI), 51-70 (IEYE…GSWF), 134-164 (RPPG…PPID), 202-241 (QQEK…VEED), and 261-350 (PALM…GEQR). Residues 137–157 (GRKKRWGRRGRGLRRHPRRSF) show a composition bias toward basic residues. Residues 209–220 (QQAALRAQQAQE) are compositionally biased toward low complexity. A compositionally biased stretch (polar residues) spans 261–271 (PALMQHNQSPT). The span at 275–346 (VEEEEKNVDD…YMLEETGLEE (72 aa)) shows a compositional bias: acidic residues. Residues 292–353 (CDEKEESEEE…LEEGEQRAEE (62 aa)) are a coiled coil.

Expressed in testis.

The protein resides in the nucleus. In terms of biological role, regulator of histone epigenetic modifications and chromatin compaction into the sperm head, required for histone-to-protamine (HTP) transition. HTP is a key event in which somatic histones are first replaced by testis-specific histone variants, then transition proteins (TNPs) are incorporated into the spermatid nucleus, and finally protamines (PRMs) replace the TNPs to promote chromatin condensation. The sequence is that of Coiled-coil domain-containing glutamate-rich protein 1 (Ccer1) from Mus musculus (Mouse).